We begin with the raw amino-acid sequence, 358 residues long: Short chain dehydrogenase sor7 (358 aa).

The tract at residues 1–22 (MSSPAIGQPPIPPTPTDANISG) is disordered. Residues leucine 34, aspartate 88, asparagine 115, tyrosine 206, lysine 210, valine 238, and threonine 240 each contribute to the NADP(+) site. Tyrosine 206 functions as the Proton donor in the catalytic mechanism. The active-site Lowers pKa of active site Tyr is the lysine 210.

This sequence belongs to the short-chain dehydrogenases/reductases (SDR) family.

The protein operates within secondary metabolite biosynthesis. In terms of biological role, short chain dehydrogenase; part of the SOR gene cluster that mediates the biosynthesis of sorbicillinoids, a diverse group of yellow secondary metabolites that restrict growth of competing pathogenic fungi but not of bacteria. Sorbicillinoids biosynthesis requires the action of two PKSs. The SOR cluster is required for the production of trichodimerol and dihydrotrichotetronin, with sor2 being sufficient for production of trichodimerol, but not dihydrotrichotetronin in the light. Sor1 iteratively combines three acetyl units and the growing chain is modified by the ketoacyl reductase subunit, and optional by the enoyl reductase subunit in the second cycle. The polyketide is then handed over to the PKS sor2, which adds three more acetyl units, and two methyl groups. Sor2 releases an aldehyde, which undergoes spontaneous cyclization resulting in the formation of sorbicillin or 2',3'-dihydrosorbicillin. The monooxygenase sor5 oxidizes sorbicillin and 2',3'-dihydrosorbicillin to 2',3'-dihydrosorbicillinol and sorbicillinol, respectively. The oxidoreductase sor8 further converts sorbicillinol into oxosorbicillinol. Sorbicillinol is the building block for the other sorbicillinoids such as disorbicillinol, bisvertinolon, dihydrobisvertinolone, and dihydrotrichotetronine. The sequence is that of Short chain dehydrogenase sor7 from Hypocrea jecorina (strain QM6a) (Trichoderma reesei).